The sequence spans 519 residues: Keratin, type II cytoskeletal 1b (519 aa).

Residues 1-166 form a head region; sequence MSRQFSSQSA…DPEIQKIKTQ (166 aa). 2 positions are modified to omega-N-methylarginine: arginine 81 and arginine 95. The interval 167-202 is coil 1A; that stretch reads EREQIKTLNNKFASFIDKVRFLEQQNQVLQTKWELL. The region spanning 167 to 480 is the IF rod domain; it reads EREQIKTLNN…ELLEGEESRM (314 aa). A linker 1 region spans residues 203 to 221; the sequence is QQVNTSTRTSSLEPIFEEF. The segment at 222–313 is coil 1B; the sequence is INQLQRQVDV…YLFDTELSQI (92 aa). The interval 314–337 is linker 12; the sequence is QTHVSDTNVILSMDNNRSLDLDSI. A coil 2 region spans residues 338–476; it reads INAVRTQYEL…ATYRELLEGE (139 aa). Positions 477-519 are tail; sequence ESRMSGALQSQVSIWALPSNEGNDLGERLHDPQSQVPVPKLGC. Residues 499-519 are disordered; the sequence is NDLGERLHDPQSQVPVPKLGC.

It belongs to the intermediate filament family. Post-translationally, undergoes deimination of some arginine residues (citrullination).

The sequence is that of Keratin, type II cytoskeletal 1b (Krt77) from Rattus norvegicus (Rat).